A 272-amino-acid chain; its full sequence is Regulatory protein RecX (272 aa).

The protein belongs to the RecX family.

The protein resides in the cytoplasm. Functionally, modulates RecA activity. The chain is Regulatory protein RecX from Oceanobacillus iheyensis (strain DSM 14371 / CIP 107618 / JCM 11309 / KCTC 3954 / HTE831).